The chain runs to 393 residues: Carbamoyl phosphate synthase small chain (393 aa).

The tract at residues 1 to 194 is CPSase; sequence MSKDTTTYQG…TYVIEAEGEE (194 aa). The L-glutamine site is built by Ser61, Gly245, and Gly247. The Glutamine amidotransferase type-1 domain occupies 195 to 390; it reads RHTVVAYDLG…VELMDADAQK (196 aa). Residue Cys273 is the Nucleophile of the active site. Residues Phe274, Gln277, Asn315, Gly317, and Phe318 each coordinate L-glutamine. Active-site residues include His363 and Glu365.

Belongs to the CarA family. Composed of two chains; the small (or glutamine) chain promotes the hydrolysis of glutamine to ammonia, which is used by the large (or ammonia) chain to synthesize carbamoyl phosphate. Tetramer of heterodimers (alpha,beta)4.

It catalyses the reaction hydrogencarbonate + L-glutamine + 2 ATP + H2O = carbamoyl phosphate + L-glutamate + 2 ADP + phosphate + 2 H(+). The catalysed reaction is L-glutamine + H2O = L-glutamate + NH4(+). It functions in the pathway amino-acid biosynthesis; L-arginine biosynthesis; carbamoyl phosphate from bicarbonate: step 1/1. The protein operates within pyrimidine metabolism; UMP biosynthesis via de novo pathway; (S)-dihydroorotate from bicarbonate: step 1/3. In terms of biological role, small subunit of the glutamine-dependent carbamoyl phosphate synthetase (CPSase). CPSase catalyzes the formation of carbamoyl phosphate from the ammonia moiety of glutamine, carbonate, and phosphate donated by ATP, constituting the first step of 2 biosynthetic pathways, one leading to arginine and/or urea and the other to pyrimidine nucleotides. The small subunit (glutamine amidotransferase) binds and cleaves glutamine to supply the large subunit with the substrate ammonia. The polypeptide is Carbamoyl phosphate synthase small chain (Corynebacterium glutamicum (strain ATCC 13032 / DSM 20300 / JCM 1318 / BCRC 11384 / CCUG 27702 / LMG 3730 / NBRC 12168 / NCIMB 10025 / NRRL B-2784 / 534)).